A 564-amino-acid chain; its full sequence is Glutamate--tRNA ligase (564 aa).

The short motif at 107–117 is the 'HIGH' region element; the sequence is PNPNGPPTLGS.

This sequence belongs to the class-I aminoacyl-tRNA synthetase family. Glutamate--tRNA ligase type 2 subfamily.

The protein localises to the cytoplasm. The enzyme catalyses tRNA(Glu) + L-glutamate + ATP = L-glutamyl-tRNA(Glu) + AMP + diphosphate. Its function is as follows. Catalyzes the attachment of glutamate to tRNA(Glu) in a two-step reaction: glutamate is first activated by ATP to form Glu-AMP and then transferred to the acceptor end of tRNA(Glu). The sequence is that of Glutamate--tRNA ligase from Methanothrix thermoacetophila (strain DSM 6194 / JCM 14653 / NBRC 101360 / PT) (Methanosaeta thermophila).